The following is a 739-amino-acid chain: Catalase-peroxidase 1 (739 aa).

The interval 1–33 (MPEDRPIEDSPPIGEAQTDAPAGGCPAGFGRIK) is disordered. A cross-link (tryptophyl-tyrosyl-methioninium (Trp-Tyr) (with M-262)) is located at residues 113–236 (WHAAGTYRVS…LAAVQMGLIY (124 aa)). Histidine 114 serves as the catalytic Proton acceptor. Positions 236–262 (YVNPEGPNGNPDPQASAIDIRETFGRM) form a cross-link, tryptophyl-tyrosyl-methioninium (Tyr-Met) (with W-113). Histidine 277 contacts heme b.

This sequence belongs to the peroxidase family. Peroxidase/catalase subfamily. Homodimer or homotetramer. Heme b is required as a cofactor. In terms of processing, formation of the three residue Trp-Tyr-Met cross-link is important for the catalase, but not the peroxidase activity of the enzyme.

The enzyme catalyses H2O2 + AH2 = A + 2 H2O. It catalyses the reaction 2 H2O2 = O2 + 2 H2O. Functionally, bifunctional enzyme with both catalase and broad-spectrum peroxidase activity. May play a role in the intracellular survival of mycobacteria. This Mycolicibacterium smegmatis (strain ATCC 700084 / mc(2)155) (Mycobacterium smegmatis) protein is Catalase-peroxidase 1.